The sequence spans 489 residues: Protein LMBR1L (489 aa).

Over 1-21 the chain is Extracellular; the sequence is MEAPDYEVLSVREQLFHERIR. Positions 1 to 59 are interaction with LGB; it reads MEAPDYEVLSVREQLFHERIRECIISTLLFATLYILCHIFLTRFKKPAEFTTVDDEDAT. An LCN1-binding region spans residues 1–76; the sequence is MEAPDYEVLS…LCTFTLAIAL (76 aa). A helical transmembrane segment spans residues 22–42; it reads ECIISTLLFATLYILCHIFLT. Residues 43–66 lie on the Cytoplasmic side of the membrane; sequence RFKKPAEFTTVDDEDATVNKIALE. The helical transmembrane segment at 67–87 threads the bilayer; the sequence is LCTFTLAIALGAVLLLPFSII. Residues 88-114 are Extracellular-facing; it reads SNEVLLSLPRNYYIQWLNGSLIHGLWN. The chain crosses the membrane as a helical span at residues 115-135; the sequence is LVFLFSNLSLIFLMPFAYFFT. Residues 136 to 154 lie on the Cytoplasmic side of the membrane; the sequence is ESEGFAGSRKGVLGRVYET. Residues 155–175 traverse the membrane as a helical segment; it reads VVMLMLLTLLVLGMVWVASAI. The Extracellular segment spans residues 176–196; it reads VDKNKANRESLYDFWEYYLPY. The helical transmembrane segment at 197–217 threads the bilayer; sequence LYSCISFLGVLLLLVCTPLGL. The Cytoplasmic portion of the chain corresponds to 218 to 305; that stretch reads ARMFSVTGKL…NLGYPLAMLC (88 aa). The helical transmembrane segment at 306-326 threads the bilayer; the sequence is LLVLTGLSVLIVAIHILELLI. Over 327 to 350 the chain is Extracellular; sequence DEAAMPRGMQGTSLGQVSFSKLGS. A helical membrane pass occupies residues 351–371; sequence FGAVIQVVLIFYLMVSSVVGF. Topologically, residues 372-388 are cytoplasmic; it reads YSSPLFRSLRPRWHDTA. A helical membrane pass occupies residues 389–409; that stretch reads MTQIIGNCVCLLVLSSALPVF. The Extracellular segment spans residues 410 to 431; it reads SRTLGLTRFDLLGDFGRFNWLG. Residues 432–452 traverse the membrane as a helical segment; it reads NFYIVFLYNAAFAGLTTLCLV. At 453–489 the chain is on the cytoplasmic side; the sequence is KTFTAAVRAELIRAFGLDRLPLPVSGFPQASRKTQHQ.

It belongs to the LIMR family. In terms of assembly, dimer. Can also form higher oligomers. Interacts with LCN1; this interaction mediates the endocytosis of LCN1. Interacts with UBAC2, FAF2, VCP, AMFR, ZNRF3, CTNNB1, LRP6, GSK3A and GSK3B. Interacts with DVL2 and RNF43. Interaction with SCGB1A1 has been observed in PubMed:16423471, but not in PubMed:23964685. Interaction with LGB which mediates the endocytosis of LGB has been observed in PubMed:17991420, but not in PubMed:23964685. As to expression, expressed in testis, pituitary gland, adrenal gland, trachea, placenta, thymus, cerebellum, stomach, mammary gland, spinal cord. A weaker expression is detected in colon, pancreas, and prostate.

The protein resides in the cell membrane. It localises to the endoplasmic reticulum membrane. Plays an essential role in lymphocyte development by negatively regulating the canonical Wnt signaling pathway. In association with UBAC2 and E3 ubiquitin-protein ligase AMFR, promotes the ubiquitin-mediated degradation of CTNNB1 and Wnt receptors FZD6 and LRP6. LMBR1L stabilizes the beta-catenin destruction complex that is required for regulating CTNNB1 levels. Acts as a LCN1 receptor and can mediate its endocytosis. In Homo sapiens (Human), this protein is Protein LMBR1L (LMBR1L).